Reading from the N-terminus, the 267-residue chain is Multivesicular body subunit 12A (267 aa).

One can recognise an MABP domain in the interval 7-146 (AAPLSGVGWA…SFAIWCKKGA (140 aa)). The SH3-binding motif lies at 154–159 (PVPKPR). The UMA domain occupies 210–259 (MDGVPFTLHPKFERSPKSDSSAILTDLTVKSLADIEKEYNYTFVVERTAA).

It belongs to the MVB12 family. Component of the ESCRT-I complex (endosomal sorting complex required for transport I).

It is found in the cytoplasm. It localises to the endosome. Its subcellular location is the late endosome membrane. Functionally, component of the ESCRT-I complex, a regulator of vesicular trafficking process. Required for the sorting of endocytic ubiquitinated cargos into multivesicular bodies. This is Multivesicular body subunit 12A (MVB12A) from Gallus gallus (Chicken).